A 518-amino-acid chain; its full sequence is UPF0053 inner membrane protein YoaE (518 aa).

Topologically, residues 1–13 are cytoplasmic; it reads MEFLMDPSIWAGL. A helical membrane pass occupies residues 14–34; that stretch reads LTLVVLEIVLGIDNLVFIAIL. Residues 35 to 48 are Periplasmic-facing; it reads ADKLPPKQRDKARL. A helical membrane pass occupies residues 49 to 69; that stretch reads LGLSLALIMRLGLLSLISWMV. Topologically, residues 70-78 are cytoplasmic; that stretch reads TLTKPLFTV. A helical membrane pass occupies residues 79–99; that stretch reads MDFSFSGRDLIMLFGGIFLLF. At 100–124 the chain is on the periplasmic side; that stretch reads KATTELHERLENRDHDSGHGKGYAS. Residues 125–145 form a helical membrane-spanning segment; it reads FWVVVTQIVILDAVFSLDAVI. Residues 146 to 149 lie on the Cytoplasmic side of the membrane; sequence TAVG. The chain crosses the membrane as a helical span at residues 150 to 170; sequence MVNHLPVMMAAVVIAMAVMLL. At 171–184 the chain is on the periplasmic side; the sequence is ASKPLTRFVNQHPT. A helical transmembrane segment spans residues 185-205; it reads VVVLCLSFLLMIGLSLVAEGF. Position 206 (Gly-206) is a topological domain, cytoplasmic. A helical membrane pass occupies residues 207-227; sequence FHIPKGYLYAAIGFSIIIEVF. The Periplasmic portion of the chain corresponds to 228 to 354; the sequence is NQIARRNFIR…IGIVRAKELL (127 aa). 2 CBS domains span residues 304–363 and 367–427; these read MTPR…GVDV and ASAS…DADE. The helical transmembrane segment at 355–375 threads the bilayer; that stretch reads VALEEGVDVAAIASASPAIIV. Topologically, residues 376–518 are cytoplasmic; that stretch reads PETLDPINLL…KEQPAHDEDE (143 aa).

The protein belongs to the UPF0053 family.

It is found in the cell inner membrane. The chain is UPF0053 inner membrane protein YoaE (yoaE) from Escherichia coli O157:H7.